The following is a 462-amino-acid chain: tRNA modification GTPase MnmE (462 aa).

The (6S)-5-formyl-5,6,7,8-tetrahydrofolate site is built by Arg27, Glu89, and Arg128. Residues Gly224–Phe383 form the TrmE-type G domain. Residue Asn234 participates in K(+) binding. GTP is bound by residues Asn234 to Ser239, Thr253 to Thr259, and Asp278 to Gly281. Ser238 contributes to the Mg(2+) binding site. K(+) is bound by residues Thr253, Val255, and Thr258. Position 259 (Thr259) interacts with Mg(2+). Lys462 contributes to the (6S)-5-formyl-5,6,7,8-tetrahydrofolate binding site.

Belongs to the TRAFAC class TrmE-Era-EngA-EngB-Septin-like GTPase superfamily. TrmE GTPase family. Homodimer. Heterotetramer of two MnmE and two MnmG subunits. The cofactor is K(+).

The protein resides in the cytoplasm. Exhibits a very high intrinsic GTPase hydrolysis rate. Involved in the addition of a carboxymethylaminomethyl (cmnm) group at the wobble position (U34) of certain tRNAs, forming tRNA-cmnm(5)s(2)U34. The polypeptide is tRNA modification GTPase MnmE (Lacticaseibacillus paracasei (strain ATCC 334 / BCRC 17002 / CCUG 31169 / CIP 107868 / KCTC 3260 / NRRL B-441) (Lactobacillus paracasei)).